The chain runs to 127 residues: Mediator of RNA polymerase II transcription subunit 31 (127 aa).

This sequence belongs to the Mediator complex subunit 31 family. As to quaternary structure, component of the Mediator complex, which is composed of at least 21 subunits that form three structurally distinct submodules. The Mediator head module contains MED6, MED8, MED11, SRB4/MED17, SRB5/MED18, ROX3/MED19, SRB2/MED20 and SRB6/MED22, the middle module contains MED1, MED4, NUT1/MED5, MED7, CSE2/MED9, NUT2/MED10, SRB7/MED21 and SOH1/MED31, and the tail module contains MED2, PGD1/MED3, RGR1/MED14, GAL11/MED15 and SIN4/MED16. The head and the middle modules interact directly with RNA polymerase II, whereas the elongated tail module interacts with gene-specific regulatory proteins.

The protein localises to the nucleus. Component of the Mediator complex, a coactivator involved in the regulated transcription of nearly all RNA polymerase II-dependent genes. Mediator functions as a bridge to convey information from gene-specific regulatory proteins to the basal RNA polymerase II transcription machinery. The Mediator complex, having a compact conformation in its free form, is recruited to promoters by direct interactions with regulatory proteins and serves for the assembly of a functional preinitiation complex with RNA polymerase II and the general transcription factors. The Mediator complex unfolds to an extended conformation and partially surrounds RNA polymerase II, specifically interacting with the unphosphorylated form of the C-terminal domain (CTD) of RNA polymerase II. The Mediator complex dissociates from the RNA polymerase II holoenzyme and stays at the promoter when transcriptional elongation begins. This is Mediator of RNA polymerase II transcription subunit 31 (SOH1) from Saccharomyces cerevisiae (strain ATCC 204508 / S288c) (Baker's yeast).